The sequence spans 274 residues: NAD(P)H dehydrogenase [quinone] 1 (274 aa).

FAD is bound by residues histidine 12, 18–19 (FN), and glutamine 67. Position 82 is a phosphoserine (serine 82). 104–107 (LQWF) provides a ligand contact to FAD. A substrate-binding site is contributed by 126 to 128 (AYT). FAD is bound by residues 148–151 (TTGG), tyrosine 156, and arginine 201. An important for apoenzyme conformational stability region spans residues 225-274 (PSSLFDLNFQAGFLMKKEVQDEEKNKKFGLSVGHHLGKSIPTDNQIKARK). Residues lysine 250 and lysine 251 each participate in a glycyl lysine isopeptide (Lys-Gly) (interchain with G-Cter in SUMO2) cross-link.

The protein belongs to the NAD(P)H dehydrogenase (quinone) family. In terms of assembly, homodimer. Interacts with PDLIM4 isoform 2; this interaction stabilizes PDLIM4 isoform 2 in response to oxidative stress and protects it from ubiquitin-independent degradation by the core 20S proteasome. Interacts with TP73 (via SAM domain); this interaction is NADH-dependent, stabilizes TP73 in response to oxidative stress and protects it from ubiquitin-independent degradation by the 20S proteasome. Interacts with TP53; this interaction is NADH-dependent, stabilizes TP53 in response to oxidative stress and protects it from ubiquitin-independent degradation by the 20S proteasome. The cofactor is FAD.

The protein resides in the cytoplasm. It localises to the cytosol. The enzyme catalyses a quinone + NADH + H(+) = a quinol + NAD(+). It catalyses the reaction a quinone + NADPH + H(+) = a quinol + NADP(+). It carries out the reaction ubiquinone-10 + NADH + H(+) = ubiquinol-10 + NAD(+). The catalysed reaction is menadione + NADH + H(+) = menadiol + NAD(+). Inhibited by dicoumarol. In terms of biological role, flavin-containing quinone reductase that catalyzes two-electron reduction of quinones to hydroquinones using either NADH or NADPH as electron donors. In a ping-pong kinetic mechanism, the electrons are sequentially transferred from NAD(P)H to flavin cofactor and then from reduced flavin to the quinone, bypassing the formation of semiquinone and reactive oxygen species. Regulates cellular redox state primarily through quinone detoxification. Reduces components of plasma membrane redox system such as coenzyme Q and vitamin quinones, producing antioxidant hydroquinone forms. In the process may function as superoxide scavenger to prevent hydroquinone oxidation and facilitate excretion. Alternatively, can activate quinones and their derivatives by generating redox reactive hydroquinones with DNA cross-linking antitumor potential. Acts as a gatekeeper of the core 20S proteasome known to degrade proteins with unstructured regions. Upon oxidative stress, interacts with tumor suppressors TP53 and TP73 in a NADH-dependent way and inhibits their ubiquitin-independent degradation by the 20S proteasome. The polypeptide is NAD(P)H dehydrogenase [quinone] 1 (Homo sapiens (Human)).